Reading from the N-terminus, the 463-residue chain is Ribosomal protein uS12 methylthiotransferase RimO (463 aa).

Residues 15-130 (PKVGMVSLGC…VMQVVHSHLP (116 aa)) enclose the MTTase N-terminal domain. The [4Fe-4S] cluster site is built by cysteine 24, cysteine 60, cysteine 89, cysteine 161, cysteine 165, and cysteine 168. The Radical SAM core domain maps to 147–392 (LTPRHYAYLK…MEVAEEVSAA (246 aa)). The TRAM domain occupies 395–463 (ERKVGKTLKV…ADGHDLWGEV (69 aa)).

This sequence belongs to the methylthiotransferase family. RimO subfamily. It depends on [4Fe-4S] cluster as a cofactor.

The protein localises to the cytoplasm. The enzyme catalyses L-aspartate(89)-[ribosomal protein uS12]-hydrogen + (sulfur carrier)-SH + AH2 + 2 S-adenosyl-L-methionine = 3-methylsulfanyl-L-aspartate(89)-[ribosomal protein uS12]-hydrogen + (sulfur carrier)-H + 5'-deoxyadenosine + L-methionine + A + S-adenosyl-L-homocysteine + 2 H(+). Catalyzes the methylthiolation of an aspartic acid residue of ribosomal protein uS12. This is Ribosomal protein uS12 methylthiotransferase RimO from Burkholderia thailandensis (strain ATCC 700388 / DSM 13276 / CCUG 48851 / CIP 106301 / E264).